We begin with the raw amino-acid sequence, 436 residues long: GTPase Der (436 aa).

EngA-type G domains lie at 4-167 and 176-351; these read PIVA…KEEE and IRLS…ENHK. GTP is bound by residues 10–17, 57–61, 119–122, 182–189, 229–233, and 294–297; these read GRPNVGKS, DTGGI, NKVD, DTAGM, and NKWD. The 85-residue stretch at 352 to 436 folds into the KH-like domain; it reads KRVQSSTLNE…PVHIIARKRN (85 aa).

The protein belongs to the TRAFAC class TrmE-Era-EngA-EngB-Septin-like GTPase superfamily. EngA (Der) GTPase family. Associates with the 50S ribosomal subunit.

GTPase that plays an essential role in the late steps of ribosome biogenesis. This Staphylococcus saprophyticus subsp. saprophyticus (strain ATCC 15305 / DSM 20229 / NCIMB 8711 / NCTC 7292 / S-41) protein is GTPase Der.